A 406-amino-acid chain; its full sequence is ATPase ASNA1 homolog (406 aa).

21–28 (KGGVGKTT) is a binding site for ATP. Asp-62 is an active-site residue. ATP contacts are provided by Glu-300 and Asn-327. Residues Cys-339 and Cys-342 each coordinate Zn(2+).

This sequence belongs to the arsA ATPase family. As to quaternary structure, homodimer.

It localises to the cytoplasm. It is found in the endoplasmic reticulum. In terms of biological role, ATPase required for the post-translational delivery of tail-anchored (TA) proteins to the endoplasmic reticulum. Recognizes and selectively binds the transmembrane domain of TA proteins in the cytosol. This complex then targets to the endoplasmic reticulum by membrane-bound receptors, where the tail-anchored protein is released for insertion. This process is regulated by ATP binding and hydrolysis. ATP binding drives the homodimer towards the closed dimer state, facilitating recognition of newly synthesized TA membrane proteins. ATP hydrolysis is required for insertion. Subsequently, the homodimer reverts towards the open dimer state, lowering its affinity for the membrane-bound receptor, and returning it to the cytosol to initiate a new round of targeting. This Leishmania braziliensis protein is ATPase ASNA1 homolog.